We begin with the raw amino-acid sequence, 291 residues long: Bifunctional protein FolD (291 aa).

Residues 167–169 and Ser-192 contribute to the NADP(+) site; that span reads GRS.

This sequence belongs to the tetrahydrofolate dehydrogenase/cyclohydrolase family. In terms of assembly, homodimer.

It carries out the reaction (6R)-5,10-methylene-5,6,7,8-tetrahydrofolate + NADP(+) = (6R)-5,10-methenyltetrahydrofolate + NADPH. It catalyses the reaction (6R)-5,10-methenyltetrahydrofolate + H2O = (6R)-10-formyltetrahydrofolate + H(+). It functions in the pathway one-carbon metabolism; tetrahydrofolate interconversion. Functionally, catalyzes the oxidation of 5,10-methylenetetrahydrofolate to 5,10-methenyltetrahydrofolate and then the hydrolysis of 5,10-methenyltetrahydrofolate to 10-formyltetrahydrofolate. This is Bifunctional protein FolD from Leptospira biflexa serovar Patoc (strain Patoc 1 / Ames).